Here is a 491-residue protein sequence, read N- to C-terminus: Putative F-box/LRR-repeat protein At3g59230 (491 aa).

Residues lysine 11–aspartate 57 form the F-box domain. LRR repeat units follow at residues leucine 127 to alanine 154, asparagine 156 to serine 182, glutamate 184 to aspartate 209, alanine 325 to serine 351, asparagine 352 to glycine 377, asparagine 419 to tyrosine 444, and valine 472 to isoleucine 491.

The sequence is that of Putative F-box/LRR-repeat protein At3g59230 from Arabidopsis thaliana (Mouse-ear cress).